The sequence spans 273 residues: Dermonecrotic toxin LhSicTox-alphaIA2avi (273 aa).

H5 is a catalytic residue. Mg(2+) contacts are provided by E25 and D27. H41 serves as the catalytic Nucleophile. Disulfide bonds link C45–C51 and C47–C190. D85 lines the Mg(2+) pocket.

The protein belongs to the arthropod phospholipase D family. Class II subfamily. Mg(2+) serves as cofactor. As to expression, expressed by the venom gland.

The protein resides in the secreted. It carries out the reaction an N-(acyl)-sphingosylphosphocholine = an N-(acyl)-sphingosyl-1,3-cyclic phosphate + choline. The catalysed reaction is an N-(acyl)-sphingosylphosphoethanolamine = an N-(acyl)-sphingosyl-1,3-cyclic phosphate + ethanolamine. The enzyme catalyses a 1-acyl-sn-glycero-3-phosphocholine = a 1-acyl-sn-glycero-2,3-cyclic phosphate + choline. It catalyses the reaction a 1-acyl-sn-glycero-3-phosphoethanolamine = a 1-acyl-sn-glycero-2,3-cyclic phosphate + ethanolamine. In terms of biological role, dermonecrotic toxins cleave the phosphodiester linkage between the phosphate and headgroup of certain phospholipids (sphingolipid and lysolipid substrates), forming an alcohol (often choline) and a cyclic phosphate. This toxin acts on sphingomyelin (SM). It may also act on ceramide phosphoethanolamine (CPE), lysophosphatidylcholine (LPC) and lysophosphatidylethanolamine (LPE), but not on lysophosphatidylserine (LPS), and lysophosphatidylglycerol (LPG). It acts by transphosphatidylation, releasing exclusively cyclic phosphate products as second products. Induces dermonecrosis, hemolysis, increased vascular permeability, edema, inflammatory response, and platelet aggregation. This is Dermonecrotic toxin LhSicTox-alphaIA2avi from Loxosceles hirsuta (Recluse spider).